The primary structure comprises 366 residues: uncharacterized protein (366 aa).

This is an uncharacterized protein from Caenorhabditis elegans.